Here is a 928-residue protein sequence, read N- to C-terminus: 2-oxoglutarate dehydrogenase E1 component (928 aa).

This sequence belongs to the alpha-ketoglutarate dehydrogenase family. As to quaternary structure, homodimer. Part of the 2-oxoglutarate dehydrogenase (OGDH) complex composed of E1 (2-oxoglutarate dehydrogenase), E2 (dihydrolipoamide succinyltransferase) and E3 (dihydrolipoamide dehydrogenase); the complex contains multiple copies of the three enzymatic components (E1, E2 and E3). The cofactor is thiamine diphosphate.

It catalyses the reaction N(6)-[(R)-lipoyl]-L-lysyl-[protein] + 2-oxoglutarate + H(+) = N(6)-[(R)-S(8)-succinyldihydrolipoyl]-L-lysyl-[protein] + CO2. In terms of biological role, E1 component of the 2-oxoglutarate dehydrogenase (OGDH) complex which catalyzes the decarboxylation of 2-oxoglutarate, the first step in the conversion of 2-oxoglutarate to succinyl-CoA and CO(2). The sequence is that of 2-oxoglutarate dehydrogenase E1 component (sucA) from Rickettsia conorii (strain ATCC VR-613 / Malish 7).